An 81-amino-acid polypeptide reads, in one-letter code: Small ribosomal subunit protein bS18 (81 aa).

This sequence belongs to the bacterial ribosomal protein bS18 family. As to quaternary structure, part of the 30S ribosomal subunit. Forms a tight heterodimer with protein bS6.

Its function is as follows. Binds as a heterodimer with protein bS6 to the central domain of the 16S rRNA, where it helps stabilize the platform of the 30S subunit. The sequence is that of Small ribosomal subunit protein bS18 from Rubrobacter xylanophilus (strain DSM 9941 / JCM 11954 / NBRC 16129 / PRD-1).